The primary structure comprises 245 residues: 1-(5-phosphoribosyl)-5-[(5-phosphoribosylamino)methylideneamino] imidazole-4-carboxamide isomerase (245 aa).

The Proton acceptor role is filled by D8. The active-site Proton donor is D130.

Belongs to the HisA/HisF family.

The protein localises to the cytoplasm. The catalysed reaction is 1-(5-phospho-beta-D-ribosyl)-5-[(5-phospho-beta-D-ribosylamino)methylideneamino]imidazole-4-carboxamide = 5-[(5-phospho-1-deoxy-D-ribulos-1-ylimino)methylamino]-1-(5-phospho-beta-D-ribosyl)imidazole-4-carboxamide. It participates in amino-acid biosynthesis; L-histidine biosynthesis; L-histidine from 5-phospho-alpha-D-ribose 1-diphosphate: step 4/9. This chain is 1-(5-phosphoribosyl)-5-[(5-phosphoribosylamino)methylideneamino] imidazole-4-carboxamide isomerase, found in Pseudomonas fluorescens (strain Pf0-1).